The chain runs to 855 residues: DNA mismatch repair protein MutS (855 aa).

Position 616–623 (616–623 (GPNMGGKS)) interacts with ATP.

This sequence belongs to the DNA mismatch repair MutS family.

Its function is as follows. This protein is involved in the repair of mismatches in DNA. It is possible that it carries out the mismatch recognition step. This protein has a weak ATPase activity. The chain is DNA mismatch repair protein MutS from Salmonella paratyphi C (strain RKS4594).